A 262-amino-acid chain; its full sequence is Tetratricopeptide repeat protein 33 (262 aa).

Residues 17-63 form a disordered region; sequence ATSQQFEAEAADEKDAAENEDGNWLQASKRRKETLQEGCKQRSQQLK. 3 TPR repeats span residues 59 to 92, 93 to 126, and 127 to 160; these read SQQL…TPGD, ATLY…NPHS, and WEAW…YPMN. Position 197 is a phosphoserine (serine 197).

This chain is Tetratricopeptide repeat protein 33 (Ttc33), found in Mus musculus (Mouse).